Reading from the N-terminus, the 157-residue chain is Endoribonuclease YbeY (157 aa).

Residues His-116, His-120, and His-126 each coordinate Zn(2+).

It belongs to the endoribonuclease YbeY family. Requires Zn(2+) as cofactor.

The protein localises to the cytoplasm. In terms of biological role, single strand-specific metallo-endoribonuclease involved in late-stage 70S ribosome quality control and in maturation of the 3' terminus of the 16S rRNA. This is Endoribonuclease YbeY from Pseudarthrobacter chlorophenolicus (strain ATCC 700700 / DSM 12829 / CIP 107037 / JCM 12360 / KCTC 9906 / NCIMB 13794 / A6) (Arthrobacter chlorophenolicus).